Here is a 426-residue protein sequence, read N- to C-terminus: Cytochrome c biogenesis protein CcsB (426 aa).

Helical transmembrane passes span leucine 14–isoleucine 34, serine 72–arginine 92, and leucine 162–serine 182.

It belongs to the Ccs1/CcsB family. In terms of assembly, may interact with CcsA.

Its subcellular location is the cellular thylakoid membrane. In terms of biological role, required during biogenesis of c-type cytochromes (cytochrome c6 and cytochrome f) at the step of heme attachment. The chain is Cytochrome c biogenesis protein CcsB from Prochlorococcus marinus (strain NATL1A).